A 484-amino-acid polypeptide reads, in one-letter code: Sialidase-4 (484 aa).

The FRIP motif motif lies at 22-25 (YRVP). Substrate-binding residues include R23 and R43. Residues D47 and D48 each act as proton acceptor in the active site. The stretch at 127–138 (VASRDAGLSWGS) is one BNR 1 repeat. Residues Y177 and Y179 each contribute to the substrate site. One copy of the BNR 2 repeat lies at 200 to 211 (FYSDDHGRTWRC). E222 and R242 together coordinate substrate. The stretch at 251–262 (ALSTDEGTSFLP) is one BNR 3 repeat. Residues 284–357 (PAPAPNRPRD…GPRPGVSGDV (74 aa)) are disordered. Over residues 336–345 (RLQPRGDGPR) the composition is skewed to low complexity. Position 389 (R389) interacts with substrate. The Nucleophile role is filled by Y419. Residue E440 is part of the active site.

This sequence belongs to the glycosyl hydrolase 33 family. Post-translationally, N-glycosylated. Predominant form in liver. Also expressed in brain, kidney and colon. In terms of tissue distribution, highly expressed in brain and at lower levels in kidney and liver.

It is found in the cell membrane. The protein localises to the endoplasmic reticulum membrane. Its subcellular location is the microsome membrane. The protein resides in the mitochondrion membrane. It localises to the cell projection. It is found in the neuron projection. The protein localises to the mitochondrion inner membrane. Its subcellular location is the mitochondrion outer membrane. The protein resides in the lysosome lumen. It carries out the reaction Hydrolysis of alpha-(2-&gt;3)-, alpha-(2-&gt;6)-, alpha-(2-&gt;8)- glycosidic linkages of terminal sialic acid residues in oligosaccharides, glycoproteins, glycolipids, colominic acid and synthetic substrates.. It catalyses the reaction a ganglioside GM3 + H2O = a beta-D-galactosyl-(1-&gt;4)-beta-D-glucosyl-(1&lt;-&gt;1)-ceramide + N-acetylneuraminate. The enzyme catalyses a ganglioside GM3 (d18:1(4E)) + H2O = a beta-D-Gal-(1-&gt;4)-beta-D-Glc-(1&lt;-&gt;1)-Cer(d18:1(4E)) + N-acetylneuraminate. The catalysed reaction is a ganglioside GM2 + H2O = a ganglioside GA2 + N-acetylneuraminate. It carries out the reaction a ganglioside GM2 (d18:1(4E)) + H2O = a ganglioside GA2 (d18:1(4E)) + N-acetylneuraminate. It catalyses the reaction a ganglioside GD1a + H2O = a ganglioside GM1 + N-acetylneuraminate. The enzyme catalyses a ganglioside GD1a (d18:1(4E)) + H2O = a ganglioside GM1 (d18:1(4E)) + N-acetylneuraminate. The catalysed reaction is a ganglioside GD3 + H2O = a ganglioside GM3 + N-acetylneuraminate. It carries out the reaction a ganglioside GD3 (d18:1(4E)) + H2O = a ganglioside GM3 (d18:1(4E)) + N-acetylneuraminate. Its function is as follows. Exo-alpha-sialidase that catalyzes the hydrolytic cleavage of the terminal sialic acid (N-acetylneuraminic acid, Neu5Ac) of a glycan moiety in the catabolism of glycolipids, glycoproteins and oligosacharides. Efficiently hydrolyzes gangliosides including alpha-(2-&gt;3)-sialylated GD1a and GM3 and alpha-(2-&gt;8)-sialylated GD3. Hydrolyzes poly-alpha-(2-&gt;8)-sialylated neural cell adhesion molecule NCAM1 likely at growth cones, suppressing neurite outgrowth in hippocampal neurons. May desialylate sialyl Lewis A and X antigens at the cell surface, down-regulating these glycan epitopes recognized by SELE/E selectin in the initiation of cell adhesion and extravasation. Has sialidase activity toward mucin, fetuin and sialyllactose. The polypeptide is Sialidase-4 (NEU4) (Homo sapiens (Human)).